Consider the following 232-residue polypeptide: Phosphatidylserine decarboxylase proenzyme (232 aa).

S190 (schiff-base intermediate with substrate; via pyruvic acid) is an active-site residue. A Pyruvic acid (Ser); by autocatalysis modification is found at S190.

It belongs to the phosphatidylserine decarboxylase family. PSD-A subfamily. In terms of assembly, heterodimer of a large membrane-associated beta subunit and a small pyruvoyl-containing alpha subunit. It depends on pyruvate as a cofactor. In terms of processing, is synthesized initially as an inactive proenzyme. Formation of the active enzyme involves a self-maturation process in which the active site pyruvoyl group is generated from an internal serine residue via an autocatalytic post-translational modification. Two non-identical subunits are generated from the proenzyme in this reaction, and the pyruvate is formed at the N-terminus of the alpha chain, which is derived from the carboxyl end of the proenzyme. The post-translation cleavage follows an unusual pathway, termed non-hydrolytic serinolysis, in which the side chain hydroxyl group of the serine supplies its oxygen atom to form the C-terminus of the beta chain, while the remainder of the serine residue undergoes an oxidative deamination to produce ammonia and the pyruvoyl prosthetic group on the alpha chain.

The protein localises to the cell membrane. The enzyme catalyses a 1,2-diacyl-sn-glycero-3-phospho-L-serine + H(+) = a 1,2-diacyl-sn-glycero-3-phosphoethanolamine + CO2. It functions in the pathway phospholipid metabolism; phosphatidylethanolamine biosynthesis; phosphatidylethanolamine from CDP-diacylglycerol: step 2/2. Its function is as follows. Catalyzes the formation of phosphatidylethanolamine (PtdEtn) from phosphatidylserine (PtdSer). The chain is Phosphatidylserine decarboxylase proenzyme from Brucella canis (strain ATCC 23365 / NCTC 10854 / RM-666).